A 62-amino-acid chain; its full sequence is Conotoxin Qc5.1 (62 aa).

Residues 1 to 22 (MRCVPVFIILLLLSPSAPSVDA) form the signal peptide. A propeptide spanning residues 23-48 (HPMTKDDVPQASFHDDAKRTLQVPWM) is cleaved from the precursor. A Valine amide modification is found at Val60.

This sequence belongs to the conotoxin T superfamily. Contains 2 disulfide bonds that can be either 'C1-C3, C2-C4' or 'C1-C4, C2-C3', since these disulfide connectivities have been observed for conotoxins with cysteine framework V (for examples, see AC P0DQQ7 and AC P81755). As to expression, expressed by the venom duct.

The protein resides in the secreted. This Conus quercinus (Oak cone) protein is Conotoxin Qc5.1.